We begin with the raw amino-acid sequence, 849 residues long: ATP-binding cassette sub-family B member 6 (849 aa).

The Lumenal portion of the chain corresponds to 1–25 (MVRLGSYCEHNGSISQAWLDSGLSP). The required for the lysosomal targeting stretch occupies residues 1–195 (MVRLGSYCEH…TLFLFVLGIR (195 aa)). The interval 1–227 (MVRLGSYCEH…SQPLLRDPNQ (227 aa)) is required for ATPase activity. Cysteines 8 and 26 form a disulfide. Residue Asn-11 is glycosylated (N-linked (GlcNAc...) asparagine). The chain crosses the membrane as a helical span at residues 26–46 (CFYFTLVPSVLLSFSFLLGAL). Residues 47-72 (QSALYARHSTTMEPKYIPRSRLYRLQ) lie on the Cytoplasmic side of the membrane. A helical transmembrane segment spans residues 73-93 (IVLSVVLILQSVIGLIWQAAG). Residues 94 to 98 (TDVVY) are Lumenal-facing. Residues 99 to 119 (GYMIVHGCLSVVAWGFSLWLL) form a helical membrane-spanning segment. The Cytoplasmic portion of the chain corresponds to 120-136 (HLERTRALVREKSRGHG). A helical membrane pass occupies residues 137-157 (VVLLLFWALAFAAENLAFISW). Over 158–173 (QSPNWWWLSRDTVPQK) the chain is Lumenal. The helical transmembrane segment at 174 to 194 (VQFGLWITRYVCTLFLFVLGI) threads the bilayer. Over 195–254 (RAPGRPRKPYIVLINEDERDVETSQPLLRDPNQSTWQGFKKKLLLVMQYIWPRRNIPLQL) the chain is Cytoplasmic. A helical transmembrane segment spans residues 255–275 (LVALCMGLMGLERAINVFVPI). One can recognise an ABC transmembrane type-1 domain in the interval 256 to 547 (VALCMGLMGL…FGTYYRMIQS (292 aa)). Residues 276-291 (YAKKIVDGLTEDSTWN) lie on the Lumenal side of the membrane. A helical membrane pass occupies residues 292-312 (ILAVTVCIYVLLKFLQGGGAG). Residues 313–373 (TTGFLSNLRT…VDRGTSSINS (61 aa)) are Cytoplasmic-facing. Residues 374-394 (LLSYIVFSILPTIADIVIGIV) traverse the membrane as a helical segment. Topologically, residues 395 to 401 (YFTSSFN) are lumenal. Residues 402–422 (AWFGLIIFVCMTLYLTLTIII) form a helical membrane-spanning segment. Topologically, residues 423-492 (TEWRTKYRRE…ASLAMLNQTQ (70 aa)) are cytoplasmic. Residues 493–513 (NLIIGLGLLAGSLLCAYFVTE) traverse the membrane as a helical segment. The Lumenal portion of the chain corresponds to 514–520 (NKFKVGD). The helical transmembrane segment at 521-541 (YVLFGTYIIQLYTPLNWFGTY) threads the bilayer. Residues 542 to 849 (YRMIQSSFID…PPKATPRRGH (308 aa)) lie on the Cytoplasmic side of the membrane. Residues 581–815 (IEFENVHFSY…GGVYAGMWQK (235 aa)) enclose the ABC transporter domain. Residues Tyr-590 and 614–625 (GPSGSGKSTIIR) contribute to the ATP site. Over residues 814 to 825 (QKQQSGSESSSD) the composition is skewed to low complexity. Residues 814–849 (QKQQSGSESSSDSDSERKDRTSEKLQPPKATPRRGH) form a disordered region. Basic and acidic residues predominate over residues 827–836 (DSERKDRTSE).

It belongs to the ABC transporter superfamily. ABCB family. Heavy Metal importer (TC 3.A.1.210) subfamily. As to quaternary structure, homodimer. In terms of processing, N-glycosylated.

Its subcellular location is the cell membrane. The protein resides in the mitochondrion outer membrane. The protein localises to the endoplasmic reticulum membrane. It localises to the golgi apparatus membrane. It is found in the endosome membrane. Its subcellular location is the lysosome membrane. The protein resides in the late endosome membrane. The protein localises to the early endosome membrane. It localises to the secreted. It is found in the extracellular exosome. Its subcellular location is the mitochondrion. The protein resides in the endosome. The protein localises to the multivesicular body membrane. It localises to the melanosome membrane. The enzyme catalyses heme b(in) + ATP + H2O = heme b(out) + ADP + phosphate + H(+). It catalyses the reaction coproporphyrin III(in) + ATP + H2O = coproporphyrin III(out) + ADP + phosphate + H(+). The catalysed reaction is pheophorbide a(in) + ATP + H2O = pheophorbide a(out) + ADP + phosphate + H(+). It carries out the reaction coproporphyrinogen III(in) + ATP + H2O = coproporphyrinogen III(out) + ADP + phosphate + H(+). The enzyme catalyses protoporphyrin IX(in) + ATP + H2O = protoporphyrin IX(out) + ADP + phosphate + H(+). It catalyses the reaction coproporphyrin I(in) + ATP + H2O = coproporphyrin I(out) + ADP + phosphate + H(+). The catalysed reaction is uroporphyrin I(in) + ATP + H2O = uroporphyrin I(out) + ADP + phosphate + H(+). It carries out the reaction uroporphyrin III(in) + ATP + H2O = uroporphyrin III(out) + ADP + phosphate + H(+). In terms of biological role, ATP-dependent transporter that catalyzes the transport of a broad-spectrum of porphyrins from the cytoplasm to the extracellular space through the plasma membrane or into the vesicle lumen. May also function as an ATP-dependent importer of porphyrins from the cytoplasm into the mitochondria, in turn may participate in the de novo heme biosynthesis regulation and in the coordination of heme and iron homeostasis during phenylhydrazine stress. May also play a key role in the early steps of melanogenesis producing PMEL amyloid fibrils. In vitro, it confers to cells a resistance to toxic metal such as arsenic and cadmium and against chemotherapeutics agent such as 5-fluorouracil, SN-38 and vincristin. In addition may play a role in the transition metal homeostasis. The sequence is that of ATP-binding cassette sub-family B member 6 (abcb6) from Xenopus tropicalis (Western clawed frog).